Reading from the N-terminus, the 189-residue chain is Protein Rex (189 aa).

Residues methionine 1–proline 16 show a composition bias toward basic residues. Residues methionine 1–leucine 26 are disordered. A Nuclear localization signal, and RNA-binding (RxRE) motif is present at residues proline 2–threonine 18. The homomultimerization stretch occupies residues arginine 56–serine 70. A Phosphoserine; by host modification is found at serine 70. The Nuclear export signal signature appears at leucine 82–glycine 93. The segment at tyrosine 87–arginine 189 is disordered. Residues isoleucine 115–serine 125 are compositionally biased toward pro residues. Positions proline 123–threonine 131 are homomultimerization. Position 174 is a phosphothreonine; by host (threonine 174). Serine 177 is modified (phosphoserine; by host). Pro residues predominate over residues phenylalanine 178–arginine 189.

This sequence belongs to the deltaretrovirus Rex protein family. Homomultimer. Multimeric assembly is essential for activity and involves XPO1. Binds to human XPO1 and KPNB1. Interacts (via N-terminal nuclear localization signal) with human NPM1. Phosphorylated.

The protein localises to the host nucleus. It is found in the host nucleolus. It localises to the host cytoplasm. Its function is as follows. Rex escorts unspliced gag-pro-pol and singly spliced env mRNAs out of the nucleus of infected cells. These mRNAs carry a recognition sequence called Rex responsive element (RxRE or XRE) located at the 3' region of the long terminal repeat (LTR). This function is essential since most HTLV proteins are translated from unspliced or partially spliced pre-mRNAs that cannot exit the nucleus by the pathway used by fully processed cellular mRNAs. Rex itself is translated from a fully spliced mRNA that probably readily exits the nucleus. Rex's nuclear localization signal (NLS) binds directly to KPNB1/importin beta-1 without previous binding to KPNA1/importin alpha-1. KPNB1 binds to the GDP bound form of RAN (Ran-GDP) and targets Rex to the nucleus. In the nucleus, the conversion from Ran-GDP to Ran-GTP dissociates Rex from KPNB1 and allows Rex's binding to the RRE in viral pre-mRNAs. Rex multimerizes on the RRE via cooperative assembly. This multimerization is critical for its full biological activity, since it may shield the viral RNA from being spliced or down-regulated, and probably exposes Rex's nuclear export signal (NES) to the surface. Rex can then form a complex with XPO1/CRM1, RANBP3 and Ran-GTP, leading to nuclear export of the complex. Conversion from Ran-GTP to Ran-GDP mediates dissociation of the Rex/RRE/XPO1/RANBP3/RAN complex, so that Rex can return to the nucleus for a subsequent round of export. This is Protein Rex from Homo sapiens (Human).